Consider the following 142-residue polypeptide: Large ribosomal subunit protein bL17 (142 aa).

It belongs to the bacterial ribosomal protein bL17 family. In terms of assembly, part of the 50S ribosomal subunit. Contacts protein L32.

This chain is Large ribosomal subunit protein bL17, found in Wolbachia pipientis wMel.